Reading from the N-terminus, the 791-residue chain is Organellar oligopeptidase A, chloroplastic/mitochondrial (791 aa).

Residues 1-82 (MLMATPTSRA…SSPPSMSSAA (82 aa)) constitute a chloroplast and mitochondrion transit peptide. 2 coiled-coil regions span residues 118–138 (RPGI…LEKS) and 239–259 (DDEK…LSHK). His-571 contributes to the Zn(2+) binding site. The active site involves Glu-572. Zn(2+) contacts are provided by His-575 and Glu-601. 703-709 (HIFAGGY) provides a ligand contact to substrate.

The protein belongs to the peptidase M3 family. Zn(2+) serves as cofactor.

It is found in the mitochondrion matrix. Its subcellular location is the plastid. It localises to the chloroplast stroma. It carries out the reaction Hydrolysis of oligopeptides, with broad specificity. Gly or Ala commonly occur as P1 or P1' residues, but more distant residues are also important, as is shown by the fact that Z-Gly-Pro-Gly-|-Gly-Pro-Ala is cleaved, but not Z-(Gly)(5).. Inhibited by salicylic acid. In terms of biological role, oligopeptidase degrading short peptides from 8 to 23 amino acid residues. Plays a role in the degradation of transit peptides and of peptides derived from other proteolytic events. Does not exhibit a strict cleavage pattern. Binds salicylic acid. This Arabidopsis thaliana (Mouse-ear cress) protein is Organellar oligopeptidase A, chloroplastic/mitochondrial.